The primary structure comprises 150 residues: UPF0178 protein Sbal223_2514 (150 aa).

Belongs to the UPF0178 family.

This is UPF0178 protein Sbal223_2514 from Shewanella baltica (strain OS223).